Here is a 424-residue protein sequence, read N- to C-terminus: O-methyltransferase bfoD (424 aa).

Aspartate 275 contacts S-adenosyl-L-methionine. Histidine 326 functions as the Proton acceptor in the catalytic mechanism.

This sequence belongs to the class I-like SAM-binding methyltransferase superfamily. Cation-independent O-methyltransferase family.

It functions in the pathway secondary metabolite biosynthesis. Cytochrome P450 monooxygenase; part of the gene cluster that mediates the biosynthesis of bifonsecin B, a dimeric gamma-naphthopyrone. The first step in the biosynthesis of bifonsecin B is the production of gamma-naphthopyrone precursor YWA1 by the non-reducing polyketide synthase albA, via condensation of one acetyl-CoA starter unit with 6 malonyl-CoA units. YWA1 is then methylated by bfoE at position C-6 to yield foncesin which is further methylated at position C-8 by bfoD to produce fonsecin B. A key enzyme in the biosynthetic pathway is the cytochrome P450 monooxygenase bfoB which catalyzes the oxidative dimerization of fonsecin B to bifonsecin B. Bfob also catalyzes the oxidative dimerization of rubrofusarin B into nigerone. The stereoselectivity of bfoB is influenced by the two natural monomeric substrates; homodimerization of fonsecin B yields a stereochemically pure biaryl, M-foncerine B, while rubrofusarin B yields a mixture of enantiomers M- and P-nigerone. This is O-methyltransferase bfoD from Aspergillus brasiliensis (strain CBS 101740 / IMI 381727 / IBT 21946).